We begin with the raw amino-acid sequence, 157 residues long: DNA gyrase inhibitor 2 (157 aa).

It belongs to the DNA gyrase inhibitor family. In terms of assembly, interacts with DNA gyrase.

It is found in the cytoplasm. Inhibits the supercoiling activity of DNA gyrase. Acts by inhibiting DNA gyrase at an early step, prior to (or at the step of) binding of DNA by the gyrase. It protects cells against toxins that target DNA gyrase, by inhibiting activity of these toxins and reducing the formation of lethal double-strand breaks in the cell. The sequence is that of DNA gyrase inhibitor 2 from Dickeya dadantii (strain 3937) (Erwinia chrysanthemi (strain 3937)).